Here is a 133-residue protein sequence, read N- to C-terminus: Large ribosomal subunit protein bL19 (133 aa).

The protein belongs to the bacterial ribosomal protein bL19 family.

Functionally, this protein is located at the 30S-50S ribosomal subunit interface and may play a role in the structure and function of the aminoacyl-tRNA binding site. In Sulfurihydrogenibium sp. (strain YO3AOP1), this protein is Large ribosomal subunit protein bL19.